Here is a 427-residue protein sequence, read N- to C-terminus: Enolase (427 aa).

Gln-163 lines the (2R)-2-phosphoglycerate pocket. Residue Glu-205 is the Proton donor of the active site. Residues Asp-242, Glu-285, and Asp-312 each contribute to the Mg(2+) site. 4 residues coordinate (2R)-2-phosphoglycerate: Lys-337, Arg-366, Ser-367, and Lys-388. Lys-337 serves as the catalytic Proton acceptor.

The protein belongs to the enolase family. Mg(2+) is required as a cofactor.

The protein localises to the cytoplasm. It localises to the secreted. Its subcellular location is the cell surface. The catalysed reaction is (2R)-2-phosphoglycerate = phosphoenolpyruvate + H2O. The protein operates within carbohydrate degradation; glycolysis; pyruvate from D-glyceraldehyde 3-phosphate: step 4/5. Its function is as follows. Catalyzes the reversible conversion of 2-phosphoglycerate (2-PG) into phosphoenolpyruvate (PEP). It is essential for the degradation of carbohydrates via glycolysis. The sequence is that of Enolase from Nitrobacter hamburgensis (strain DSM 10229 / NCIMB 13809 / X14).